The following is a 341-amino-acid chain: Peroxisomal membrane protein import receptor PEX19 (341 aa).

Over residues 1-18 the composition is skewed to acidic residues; sequence MNENEYDNFDDLDDLLDE. Disordered regions lie at residues 1 to 26, 39 to 66, 109 to 141, 293 to 312, and 318 to 341; these read MNEN…LDEQ, DSEN…EDPE, VPRQ…FKNI, LGDS…NEEE, and LEID…CKQQ. The span at 39-53 shows a compositional bias: basic and acidic residues; sequence DSENKEKNAESKDSD. Serine 61 is subject to Phosphoserine. A compositionally biased stretch (polar residues) spans 113-141; it reads QMEQGSSSLKSNSTDKGTLNGSNPGFKNI. Residue serine 303 is modified to Phosphoserine. The span at 330-341 shows a compositional bias: basic and acidic residues; the sequence is LDKELTDGCKQQ. The residue at position 338 (cysteine 338) is a Cysteine methyl ester. Cysteine 338 carries S-farnesyl cysteine lipidation. Residues 339–341 constitute a propeptide, removed in mature form; it reads KQQ.

The protein belongs to the peroxin-19 family. As to quaternary structure, interacts (farnesylated) with PEX3; farnesylation is required for this interaction. Interacts with PEX2, PEX5, PEX10, PEX11, PEX12, PEX13, PEX14, PEX17, PEX22, PEX25, PEX30 and PEX32; the interaction requires well-defined PEX19-binding sites within the peroxisomal membrane protein targeting signal (mPTS) of the PMPs and is independent on the presence of PEX3. Interacts with VPS1.

It localises to the cytoplasm. The protein localises to the peroxisome membrane. Its subcellular location is the endoplasmic reticulum membrane. In terms of biological role, required for proper post-translational import and stabilization of peroxisomal membrane proteins (PMPs). Acts as a cytosolic import receptor for PMPs and delivers them to the docking factor PEX3 at the peroxisomal membrane for subsequent insertion into the membrane. Acts as a chaperone in stabilizing or maintaining PMPs in the lipid bilayer. Directs PEX17, a peripheral component of the peroxisomal matrix protein translocation machinery, to peroxisomes. Stabilizes VPS1, a protein required for peroxisomal fission, at the peroxisomal membrane. Also acts in conjunction with PEX3 in the formation of peroxisomes from preperoxisomal compartments at the endoplasmic reticulum during de novo peroxisome synthesis, probably via the import of additional PMPs. The polypeptide is Peroxisomal membrane protein import receptor PEX19 (PEX19) (Saccharomyces cerevisiae (strain YJM789) (Baker's yeast)).